The sequence spans 161 residues: Protein-export protein SecB (161 aa).

The protein belongs to the SecB family. As to quaternary structure, homotetramer, a dimer of dimers. One homotetramer interacts with 1 SecA dimer.

It localises to the cytoplasm. Functionally, one of the proteins required for the normal export of preproteins out of the cell cytoplasm. It is a molecular chaperone that binds to a subset of precursor proteins, maintaining them in a translocation-competent state. It also specifically binds to its receptor SecA. This Afipia carboxidovorans (strain ATCC 49405 / DSM 1227 / KCTC 32145 / OM5) (Oligotropha carboxidovorans) protein is Protein-export protein SecB.